The following is a 454-amino-acid chain: MALNVVILAAGKGTRMRSDLPKVLHPIAHKSMVQHVIDTAHEVGSDAIQLVYGYGADKLQAKLGEQQLNWVLQAEQLGTGHAVAQANDNISDDDTVLILYGDVPLIQASTLESLLAVRDENGLAILTVNLPNPMGYGRIVREDNKVVGIVEQKDANAEQLAISEINTGIMAAPGKQLKAWLGQLSSDNAQGEYYLTDIVAMAHKDGVAITTAQPESAVEVEGANNRVQLAQLERAYQARAAEKLMLEGANLRDPARIDIRGDVSVGMDVMIDVNVVIEGTVNIGNNVTIGAGAILIDCDIADNAEIKPYSIVENAKVGVKASAGPFARLRPGAELAEDAHIGNFVEMKKALLGKGSKAGHLAYIGDATIGCGVNIGAGTITCNYDGANKFQTIIEDNVFVGSDTQLVAPITIGKGATLGAGSTITKDVAADELVITRVKQRHISGWARPVKKAK.

The tract at residues 1-226 (MALNVVILAA…AVEVEGANNR (226 aa)) is pyrophosphorylase. UDP-N-acetyl-alpha-D-glucosamine contacts are provided by residues 8–11 (LAAG), lysine 22, glutamine 73, 78–79 (GT), 100–102 (YGD), glycine 137, glutamate 151, asparagine 166, and asparagine 224. Mg(2+) is bound at residue aspartate 102. Asparagine 224 is a Mg(2+) binding site. The tract at residues 227 to 247 (VQLAQLERAYQARAAEKLMLE) is linker. The interval 248 to 454 (GANLRDPARI…GWARPVKKAK (207 aa)) is N-acetyltransferase. Residues arginine 330 and lysine 348 each contribute to the UDP-N-acetyl-alpha-D-glucosamine site. Histidine 360 (proton acceptor) is an active-site residue. Tyrosine 363 and asparagine 374 together coordinate UDP-N-acetyl-alpha-D-glucosamine. Residues alanine 377, 383–384 (NY), serine 402, alanine 420, and arginine 437 each bind acetyl-CoA.

This sequence in the N-terminal section; belongs to the N-acetylglucosamine-1-phosphate uridyltransferase family. In the C-terminal section; belongs to the transferase hexapeptide repeat family. As to quaternary structure, homotrimer. Requires Mg(2+) as cofactor.

It localises to the cytoplasm. It carries out the reaction alpha-D-glucosamine 1-phosphate + acetyl-CoA = N-acetyl-alpha-D-glucosamine 1-phosphate + CoA + H(+). The enzyme catalyses N-acetyl-alpha-D-glucosamine 1-phosphate + UTP + H(+) = UDP-N-acetyl-alpha-D-glucosamine + diphosphate. It functions in the pathway nucleotide-sugar biosynthesis; UDP-N-acetyl-alpha-D-glucosamine biosynthesis; N-acetyl-alpha-D-glucosamine 1-phosphate from alpha-D-glucosamine 6-phosphate (route II): step 2/2. The protein operates within nucleotide-sugar biosynthesis; UDP-N-acetyl-alpha-D-glucosamine biosynthesis; UDP-N-acetyl-alpha-D-glucosamine from N-acetyl-alpha-D-glucosamine 1-phosphate: step 1/1. Its pathway is bacterial outer membrane biogenesis; LPS lipid A biosynthesis. In terms of biological role, catalyzes the last two sequential reactions in the de novo biosynthetic pathway for UDP-N-acetylglucosamine (UDP-GlcNAc). The C-terminal domain catalyzes the transfer of acetyl group from acetyl coenzyme A to glucosamine-1-phosphate (GlcN-1-P) to produce N-acetylglucosamine-1-phosphate (GlcNAc-1-P), which is converted into UDP-GlcNAc by the transfer of uridine 5-monophosphate (from uridine 5-triphosphate), a reaction catalyzed by the N-terminal domain. This is Bifunctional protein GlmU from Shewanella piezotolerans (strain WP3 / JCM 13877).